Here is a 130-residue protein sequence, read N- to C-terminus: Iron-sulfur cluster insertion protein ErpA (130 aa).

Residues Cys-58, Cys-122, and Cys-124 each contribute to the iron-sulfur cluster site.

This sequence belongs to the HesB/IscA family. Homodimer. It depends on iron-sulfur cluster as a cofactor.

Its function is as follows. Required for insertion of 4Fe-4S clusters for at least IspG. The chain is Iron-sulfur cluster insertion protein ErpA from Stenotrophomonas maltophilia (strain K279a).